The sequence spans 71 residues: DNA-directed RNA polymerase subunit omega (71 aa).

The protein belongs to the RNA polymerase subunit omega family. As to quaternary structure, the RNAP catalytic core consists of 2 alpha, 1 beta, 1 beta' and 1 omega subunit. When a sigma factor is associated with the core the holoenzyme is formed, which can initiate transcription.

The enzyme catalyses RNA(n) + a ribonucleoside 5'-triphosphate = RNA(n+1) + diphosphate. In terms of biological role, promotes RNA polymerase assembly. Latches the N- and C-terminal regions of the beta' subunit thereby facilitating its interaction with the beta and alpha subunits. This is DNA-directed RNA polymerase subunit omega from Syntrophomonas wolfei subsp. wolfei (strain DSM 2245B / Goettingen).